Reading from the N-terminus, the 258-residue chain is Imidazole glycerol phosphate synthase subunit HisF (258 aa).

Active-site residues include Asp12 and Asp131.

Belongs to the HisA/HisF family. Heterodimer of HisH and HisF.

The protein localises to the cytoplasm. The enzyme catalyses 5-[(5-phospho-1-deoxy-D-ribulos-1-ylimino)methylamino]-1-(5-phospho-beta-D-ribosyl)imidazole-4-carboxamide + L-glutamine = D-erythro-1-(imidazol-4-yl)glycerol 3-phosphate + 5-amino-1-(5-phospho-beta-D-ribosyl)imidazole-4-carboxamide + L-glutamate + H(+). It participates in amino-acid biosynthesis; L-histidine biosynthesis; L-histidine from 5-phospho-alpha-D-ribose 1-diphosphate: step 5/9. Functionally, IGPS catalyzes the conversion of PRFAR and glutamine to IGP, AICAR and glutamate. The HisF subunit catalyzes the cyclization activity that produces IGP and AICAR from PRFAR using the ammonia provided by the HisH subunit. The sequence is that of Imidazole glycerol phosphate synthase subunit HisF from Nitrosomonas eutropha (strain DSM 101675 / C91 / Nm57).